Consider the following 381-residue polypeptide: Homoserine O-succinyltransferase (381 aa).

In terms of domain architecture, AB hydrolase-1 spans 45-360 (NAVLVCHALN…PHGHDAFLLD (316 aa)). S151 acts as the Nucleophile in catalysis. R221 serves as a coordination point for substrate. Active-site residues include D321 and H354. D355 contacts substrate.

The protein belongs to the AB hydrolase superfamily. MetX family. In terms of assembly, homodimer.

Its subcellular location is the cytoplasm. It carries out the reaction L-homoserine + succinyl-CoA = O-succinyl-L-homoserine + CoA. Its pathway is amino-acid biosynthesis; L-methionine biosynthesis via de novo pathway; O-succinyl-L-homoserine from L-homoserine: step 1/1. Functionally, transfers a succinyl group from succinyl-CoA to L-homoserine, forming succinyl-L-homoserine. This Burkholderia thailandensis (strain ATCC 700388 / DSM 13276 / CCUG 48851 / CIP 106301 / E264) protein is Homoserine O-succinyltransferase.